We begin with the raw amino-acid sequence, 515 residues long: Low affinity ammonium transporter (515 aa).

The Extracellular portion of the chain corresponds to Met1–Asn78. The helical transmembrane segment at Ala79 to Ile99 threads the bilayer. Topologically, residues Ala100–Lys111 are cytoplasmic. The helical transmembrane segment at Phe112–Tyr132 threads the bilayer. The Extracellular segment spans residues Ser133–Cys140. The helical transmembrane segment at Cys141 to Gly161 threads the bilayer. Residues Arg162–Asn171 lie on the Cytoplasmic side of the membrane. A helical membrane pass occupies residues Met172–Ser192. Topologically, residues Ser193–Pro202 are extracellular. Residues Trp203–Ile223 traverse the membrane as a helical segment. Residues Pro224 to Arg241 lie on the Cytoplasmic side of the membrane. A helical membrane pass occupies residues Ile242–Asn262. The Extracellular segment spans residues Gln263 to Gln270. Residues Thr271–Ile291 traverse the membrane as a helical segment. At Glu292–Ala310 the chain is on the cytoplasmic side. A helical membrane pass occupies residues Phe311–Trp331. Residues Gln332–Ser346 are Extracellular-facing. The helical transmembrane segment at Ala347 to Leu367 threads the bilayer. The Cytoplasmic segment spans residues Ser368 to Thr374. Residues Val375–Val395 form a helical membrane-spanning segment. The Extracellular portion of the chain corresponds to His396–Thr403. Residues Phe404–Met424 form a helical membrane-spanning segment. Residues Leu425–Gly435 lie on the Cytoplasmic side of the membrane. Residues Leu436–Ala456 form a helical membrane-spanning segment. The Extracellular segment spans residues Gly457–Tyr479. The helical transmembrane segment at Met480 to Phe500 threads the bilayer. The Cytoplasmic segment spans residues Met501 to Glu515.

Belongs to the major facilitator superfamily.

The protein resides in the cell membrane. Low affinity ammonium transporter of the plasma membrane. May be involved in drug resistance through pumping them out of the cell. The chain is Low affinity ammonium transporter from Saccharomyces cerevisiae (strain ATCC 204508 / S288c) (Baker's yeast).